The primary structure comprises 268 residues: MRMCRRVVTVLALSLPLAAWAEVPVVDDNAGSYPPAGYGTSGAYAGSGASAPASAQGQLFMQLQQMQDQLSRQQGIIEELQNDVSRMKQENLERYQDLDRRINSGAAPAATPDNSSGGGASNAAPDAAAGAAAQQPAGSSQPGDPAKEKLYYDAAFDLIKQKDFDKASQAFNAFLRKYPNSQYAGNAQYWLGEVNLAKGDLQGASQAFAQVSQKYPKHSKVPDSLYKLADVERRMGHTDKVKGILQQVVTQYPGTSAAQLAQRDLQKL.

Residues 1–21 (MRMCRRVVTVLALSLPLAAWA) form the signal peptide. Residues 58–94 (QLFMQLQQMQDQLSRQQGIIEELQNDVSRMKQENLER) adopt a coiled-coil conformation. The segment at 104 to 146 (SGAAPAATPDNSSGGGASNAAPDAAAGAAAQQPAGSSQPGDPA) is disordered. The segment covering 121–143 (SNAAPDAAAGAAAQQPAGSSQPG) has biased composition (low complexity). 3 TPR repeats span residues 149–181 (KLYYDAAFDLIKQKDFDKASQAFNAFLRKYPNS), 185–218 (GNAQYWLGEVNLAKGDLQGASQAFAQVSQKYPKH), and 222–255 (PDSLYKLADVERRMGHTDKVKGILQQVVTQYPGT).

This sequence belongs to the CpoB family.

It is found in the periplasm. In terms of biological role, mediates coordination of peptidoglycan synthesis and outer membrane constriction during cell division. The polypeptide is Cell division coordinator CpoB (Pseudomonas putida (strain ATCC 47054 / DSM 6125 / CFBP 8728 / NCIMB 11950 / KT2440)).